The sequence spans 497 residues: Taxane 10-beta-hydroxylase (497 aa).

Cysteine 443 contributes to the heme binding site.

It belongs to the cytochrome P450 family. Heme serves as cofactor.

The catalysed reaction is taxa-4(20),11-dien-5alpha-yl acetate + reduced [NADPH--hemoprotein reductase] + O2 = 10beta-hydroxytaxa-4(20),11-dien-5alpha-yl acetate + oxidized [NADPH--hemoprotein reductase] + H2O + H(+). It functions in the pathway alkaloid biosynthesis; taxol biosynthesis; 10-deacetyl-2-debenzoylbaccatin III from taxa-4(20),11-dien-5alpha-ol: step 2/3. Its function is as follows. Involved in the transformation of a taxadienyl acetate by hydroxylation at C10 to yield taxadien-5-alpha-acetoxy-10-beta-ol. The protein is Taxane 10-beta-hydroxylase (CYP725A1) of Taxus cuspidata (Japanese yew).